The following is a 334-amino-acid chain: Ornithine carbamoyltransferase, catabolic (334 aa).

Carbamoyl phosphate is bound by residues 57-60, glutamine 84, arginine 108, and 135-138; these read STRT and HPTQ. L-ornithine contacts are provided by residues asparagine 169, aspartate 233, and 237–238; that span reads SM. Carbamoyl phosphate contacts are provided by residues 275–276 and arginine 320; that span reads CL.

The protein belongs to the aspartate/ornithine carbamoyltransferase superfamily. OTCase family.

Its subcellular location is the cytoplasm. The enzyme catalyses carbamoyl phosphate + L-ornithine = L-citrulline + phosphate + H(+). It participates in amino-acid degradation; L-arginine degradation via ADI pathway; carbamoyl phosphate from L-arginine: step 2/2. In terms of biological role, reversibly catalyzes the transfer of the carbamoyl group from carbamoyl phosphate (CP) to the N(epsilon) atom of ornithine (ORN) to produce L-citrulline. The chain is Ornithine carbamoyltransferase, catabolic (arcB) from Salmonella typhimurium (strain LT2 / SGSC1412 / ATCC 700720).